Here is a 461-residue protein sequence, read N- to C-terminus: tRNA-2-methylthio-N(6)-dimethylallyladenosine synthase (461 aa).

Residues 25–143 form the MTTase N-terminal domain; that stretch reads PTYSIITHGC…LPYLIDRHLS (119 aa). [4Fe-4S] cluster contacts are provided by Cys-34, Cys-70, Cys-104, Cys-179, Cys-183, and Cys-186. A Radical SAM core domain is found at 165–395; it reads RDNEYVGYVN…LDVAYPIFYE (231 aa). The region spanning 398–461 is the TRAM domain; sequence KSYLGTIQEV…SFALTGEMVD (64 aa).

It belongs to the methylthiotransferase family. MiaB subfamily. Monomer. Requires [4Fe-4S] cluster as cofactor.

It is found in the cytoplasm. The catalysed reaction is N(6)-dimethylallyladenosine(37) in tRNA + (sulfur carrier)-SH + AH2 + 2 S-adenosyl-L-methionine = 2-methylsulfanyl-N(6)-dimethylallyladenosine(37) in tRNA + (sulfur carrier)-H + 5'-deoxyadenosine + L-methionine + A + S-adenosyl-L-homocysteine + 2 H(+). Functionally, catalyzes the methylthiolation of N6-(dimethylallyl)adenosine (i(6)A), leading to the formation of 2-methylthio-N6-(dimethylallyl)adenosine (ms(2)i(6)A) at position 37 in tRNAs that read codons beginning with uridine. In Finegoldia magna (strain ATCC 29328 / DSM 20472 / WAL 2508) (Peptostreptococcus magnus), this protein is tRNA-2-methylthio-N(6)-dimethylallyladenosine synthase.